The sequence spans 468 residues: MEDEEEEARALLPGGSDEAGRETRAPPAASGALQALCDPSHLAHRLVVLLLMCFLGFGSYFCYDNPAALQIQVKRDMQVNTTKFMLLYAWYSWPNVVLCFFGGFLIDRVFGIRWGTIIFSCFVCIGQVVFALGGIFNAFWLMELGRFVFGIGGESLAVAQNTYAVSWFKGKELNLVFGLQLSMARIGSTVNMNLMGWLYSKVEASLGSAGHTTLGVTLMIGGITCILSLVCALALAYLDQRAERILHKEQGKTGEVIKLTDVKDFSLPLWLIFIICVCYYVAIFPFIGLVKVFFTEKFGFSSQAASAINSVVYVISAPMSPIFGLLVDKTGKNIIWVLCAVVTTLASHIMLAFTLWNPWIAMCLLGLSYSLLACALWPMVAFVVPEHQLGTAYGFMQSIQNLGLAVISIIAGMILDTRGYLFLEVFFIACVSLSLLSVVLLYMVNHAQGGNLNYSAKKREEMKLSHEE.

Residues 1-25 are disordered; that stretch reads MEDEEEEARALLPGGSDEAGRETRA. Positions 11 to 12 match the Dileucine internalization motif motif; it reads LL. Helical transmembrane passes span 42 to 62, 86 to 106, 116 to 136, 138 to 158, 173 to 194, 218 to 238, 270 to 290, 307 to 327, 334 to 354, 364 to 384, 395 to 415, and 421 to 441; these read LAHR…SYFC, LLYA…GFLI, TIIF…GGIF, AFWL…SLAV, LNLV…NMNL, LMIG…LAYL, WLIF…IGLV, AINS…GLLV, IIWV…LAFT, LLGL…AFVV, FMQS…GMIL, and LFLE…VVLL.

Belongs to the major facilitator superfamily. In terms of assembly, homodimer. Interacts with lysosomal protein GLMP (via lumenal domain); the interaction starts while both proteins are still in the endoplasmic reticulum and is required for stabilization of MFSD1 in lysosomes but has no direct effect on its targeting to lysosomes or transporter activity.

It is found in the lysosome membrane. The enzyme catalyses L-alpha-aminoacyl-L-arginine(out) = L-alpha-aminoacyl-L-arginine(in). It carries out the reaction L-arginyl-L-alpha-amino acid(out) = L-arginyl-L-alpha-amino acid(in). The catalysed reaction is L-arginyl-glycine(out) = L-arginyl-glycine(in). It catalyses the reaction L-alpha-aminoacyl-L-lysine(out) = L-alpha-aminoacyl-L-lysine(in). The enzyme catalyses L-aspartyl-L-lysine(out) = L-aspartyl-L-lysine(in). It carries out the reaction L-alanyl-L-lysine(out) = L-alanyl-L-lysine(in). The catalysed reaction is L-lysyl-L-alpha-amino acid(out) = L-lysyl-L-alpha-amino acid(in). It catalyses the reaction L-lysyl-L-alanine(out) = L-lysyl-L-alanine(in). The enzyme catalyses L-lysyl-L-lysine(out) = L-lysyl-L-lysine(in). It carries out the reaction L-lysyl-glycine(out) = L-lysyl-glycine(in). The catalysed reaction is L-alpha-aminoacyl-L-histidine(out) = L-alpha-aminoacyl-L-histidine(in). It catalyses the reaction L-histidyl-L-alpha-amino acid(out) = L-histidyl-L-alpha-amino acid(in). The enzyme catalyses L-histidyl-glycine(out) = L-histidyl-glycine(in). Its function is as follows. Lysosomal dipeptide uniporter that selectively exports lysine, arginine or histidine-containing dipeptides with a net positive charge from the lysosome lumen into the cytosol. Could play a role in a specific type of protein O-glycosylation indirectly regulating macrophages migration and tissue invasion. Also essential for liver homeostasis. The sequence is that of Lysosomal dipeptide transporter MFSD1 from Bos taurus (Bovine).